The sequence spans 323 residues: Olfactory receptor 51S1 (323 aa).

Topologically, residues 1-33 are extracellular; the sequence is MSTLPTQIAPNSSTSMAPTFLLVGMPGLSGAPS. Asn-11 carries N-linked (GlcNAc...) asparagine glycosylation. A helical membrane pass occupies residues 34-54; sequence WWTLPLIAVYLLSALGNGTIL. Over 55-62 the chain is Cytoplasmic; sequence WIIALQPA. Residues 63–83 form a helical membrane-spanning segment; that stretch reads LHRPMHFFLFLLSVSDIGLVT. Residues 84–107 lie on the Extracellular side of the membrane; the sequence is ALMPTLLGIALAGAHTVPASACLL. Cysteines 105 and 197 form a disulfide. A helical transmembrane segment spans residues 108–128; sequence QMVFIHVFSVMESSVLLAMSI. Residues 129-147 are Cytoplasmic-facing; sequence DRALAICRPLHYPALLTNG. The chain crosses the membrane as a helical span at residues 148 to 168; that stretch reads VISKISLAISFRCLGLHLPLP. The Extracellular segment spans residues 169 to 203; sequence FLLAYMPYCLPQVLTHSYCLHPDVARLACPEAWGA. Residues 204 to 224 form a helical membrane-spanning segment; sequence AYSLFVVLSAMGLDPLLIFFS. Residues 225–244 are Cytoplasmic-facing; sequence YGLIGKVLQGVESREDRWKA. Residues 245 to 265 form a helical membrane-spanning segment; that stretch reads GQTCAAHLSAVLLFYIPMILL. At 266–280 the chain is on the extracellular side; it reads ALINHPELPITQHTH. A helical transmembrane segment spans residues 281 to 301; the sequence is TLLSYVHFLLPPLINPILYSV. The Cytoplasmic segment spans residues 302 to 323; that stretch reads KMKEIRKRILNRLQPRKVGGAQ.

Belongs to the G-protein coupled receptor 1 family.

Its subcellular location is the cell membrane. In terms of biological role, odorant receptor. This chain is Olfactory receptor 51S1 (OR51S1), found in Homo sapiens (Human).